The primary structure comprises 1125 residues: Protein efr-3 (1125 aa).

Disordered regions lie at residues 240-261, 471-493, 788-819, and 845-1093; these read RTSNATAQPSETTGGEPGPNPI, RPSRPTSPPNSSPNGERSDNGAA, TSPPTSPTTSPGRNFTHPMLGSTLSATPKDET, and QAGS…LGEK. Positions 242-252 are enriched in polar residues; that stretch reads SNATAQPSETT. A compositionally biased stretch (low complexity) spans 788 to 798; sequence TSPPTSPTTSP. The span at 845-854 shows a compositional bias: polar residues; the sequence is QAGSSQTASL. The span at 855–877 shows a compositional bias: low complexity; the sequence is NGTNGTHRNTVNNNNRLGVNGVT. Composition is skewed to polar residues over residues 878–896, 975–1011, and 1046–1071; these read SPNGSNSNLRPSSSPTGPN, LSFNPAASGSRQGSPGNTSQAASSPPRRTSQDRTQQL, and SRTTSRTQPQATTAHTTLPRPSTSSK.

Belongs to the EFR3 family.

In Neurospora crassa (strain ATCC 24698 / 74-OR23-1A / CBS 708.71 / DSM 1257 / FGSC 987), this protein is Protein efr-3 (efr-3).